The primary structure comprises 247 residues: Mast cell protease 2 (247 aa).

An N-terminal signal peptide occupies residues 1-18 (MQALLFLMALLLPSGAGA). The propeptide at 19–20 (EE) is activation peptide. Positions 21–244 (IIGGVESIPH…YVPWINAVIN (224 aa)) constitute a Peptidase S1 domain. Cysteines 50 and 66 form a disulfide. Residues histidine 65 and aspartate 109 each act as charge relay system in the active site. 2 disulfides stabilise this stretch: cysteine 143/cysteine 208 and cysteine 174/cysteine 187. The active-site Charge relay system is the serine 202.

This sequence belongs to the peptidase S1 family. Granzyme subfamily.

In terms of biological role, this enzyme, isolated from small intestine, specifically inactivates the apo forms of a certain group of intracellular pyridoxal phosphate-requiring enzymes. It has chymotrypsin-like specificity towards small substrates. This is Mast cell protease 2 (Mcpt2) from Rattus norvegicus (Rat).